Here is a 702-residue protein sequence, read N- to C-terminus: Methionine--tRNA ligase (702 aa).

The 'HIGH' region signature appears at 14 to 24; that stretch reads PYANGPVHLGH. Zn(2+)-binding residues include Cys146, Cys149, Cys159, and Cys162. The short motif at 344 to 348 is the 'KMSKS' region element; that stretch reads KFSKS. Residue Lys347 coordinates ATP. The 102-residue stretch at 601-702 folds into the tRNA-binding domain; that stretch reads DFQKVDLRVA…GEKINGQSVQ (102 aa).

The protein belongs to the class-I aminoacyl-tRNA synthetase family. MetG type 1 subfamily. In terms of assembly, homodimer. Zn(2+) serves as cofactor.

It localises to the cytoplasm. The catalysed reaction is tRNA(Met) + L-methionine + ATP = L-methionyl-tRNA(Met) + AMP + diphosphate. In terms of biological role, is required not only for elongation of protein synthesis but also for the initiation of all mRNA translation through initiator tRNA(fMet) aminoacylation. The protein is Methionine--tRNA ligase of Chlorobium luteolum (strain DSM 273 / BCRC 81028 / 2530) (Pelodictyon luteolum).